We begin with the raw amino-acid sequence, 173 residues long: Cell division protein SepF (173 aa).

Residues 17–85 (SDDEYISDET…NELRTITTVH (69 aa)) form a disordered region. Over residues 35-52 (SAGGSSAAVSESGSTSVA) the composition is skewed to low complexity.

This sequence belongs to the SepF family. Homodimer. Interacts with FtsZ.

The protein resides in the cytoplasm. Cell division protein that is part of the divisome complex and is recruited early to the Z-ring. Probably stimulates Z-ring formation, perhaps through the cross-linking of FtsZ protofilaments. Its function overlaps with FtsA. This is Cell division protein SepF from Kocuria rhizophila (strain ATCC 9341 / DSM 348 / NBRC 103217 / DC2201).